A 763-amino-acid chain; its full sequence is Thiamine biosynthesis multifunctional protein ThiED (763 aa).

The thiamine-phosphate synthase stretch occupies residues 1–210; it reads MTDFSLYLVT…ANPAAAATRL (210 aa). 4-amino-2-methyl-5-(diphosphooxymethyl)pyrimidine contacts are provided by residues 37–41 and asparagine 69; that span reads QLRDK. Aspartate 70 and aspartate 88 together coordinate Mg(2+). Serine 107 provides a ligand contact to 4-amino-2-methyl-5-(diphosphooxymethyl)pyrimidine. 140 to 142 serves as a coordination point for 2-[(2R,5Z)-2-carboxy-4-methylthiazol-5(2H)-ylidene]ethyl phosphate; sequence TAT. Lysine 143 provides a ligand contact to 4-amino-2-methyl-5-(diphosphooxymethyl)pyrimidine. Residues glycine 174 and 194–195 each bind 2-[(2R,5Z)-2-carboxy-4-methylthiazol-5(2H)-ylidene]ethyl phosphate; that span reads VS. The interval 245–500 is hydroxymethylpyrimidine/phosphomethylpyrimidine kinase; sequence LSIAGTDPTG…GTGNGPVDHG (256 aa). Glutamine 282 is a 4-amino-5-hydroxymethyl-2-methylpyrimidine binding site. Residues 550-763 form a thiaminase-2 region; the sequence is FTRALWEASG…RHGWTMVGSS (214 aa).

It in the N-terminal section; belongs to the thiamine-phosphate synthase family. The protein in the central section; belongs to the ThiD family. This sequence in the C-terminal section; belongs to the thiaminase-2 family. The cofactor is Mg(2+).

It carries out the reaction 2-[(2R,5Z)-2-carboxy-4-methylthiazol-5(2H)-ylidene]ethyl phosphate + 4-amino-2-methyl-5-(diphosphooxymethyl)pyrimidine + 2 H(+) = thiamine phosphate + CO2 + diphosphate. It catalyses the reaction 2-(2-carboxy-4-methylthiazol-5-yl)ethyl phosphate + 4-amino-2-methyl-5-(diphosphooxymethyl)pyrimidine + 2 H(+) = thiamine phosphate + CO2 + diphosphate. The catalysed reaction is 4-methyl-5-(2-phosphooxyethyl)-thiazole + 4-amino-2-methyl-5-(diphosphooxymethyl)pyrimidine + H(+) = thiamine phosphate + diphosphate. The enzyme catalyses 4-amino-5-hydroxymethyl-2-methylpyrimidine + ATP = 4-amino-2-methyl-5-(phosphooxymethyl)pyrimidine + ADP + H(+). It carries out the reaction 4-amino-2-methyl-5-(phosphooxymethyl)pyrimidine + ATP = 4-amino-2-methyl-5-(diphosphooxymethyl)pyrimidine + ADP. Its pathway is cofactor biosynthesis; thiamine diphosphate biosynthesis; 4-amino-2-methyl-5-diphosphomethylpyrimidine from 5-amino-1-(5-phospho-D-ribosyl)imidazole: step 3/3. It participates in cofactor biosynthesis; thiamine diphosphate biosynthesis; thiamine phosphate from 4-amino-2-methyl-5-diphosphomethylpyrimidine and 4-methyl-5-(2-phosphoethyl)-thiazole: step 1/1. Functionally, condenses 4-methyl-5-(beta-hydroxyethyl)thiazole monophosphate (THZ-P) and 2-methyl-4-amino-5-hydroxymethyl pyrimidine pyrophosphate (HMP-PP) to form thiamine monophosphate (TMP). In terms of biological role, catalyzes the phosphorylation of hydroxymethylpyrimidine phosphate (HMP-P) to HMP-PP, and of HMP to HMP-P. This chain is Thiamine biosynthesis multifunctional protein ThiED (theD), found in Corynebacterium glutamicum (strain ATCC 13032 / DSM 20300 / JCM 1318 / BCRC 11384 / CCUG 27702 / LMG 3730 / NBRC 12168 / NCIMB 10025 / NRRL B-2784 / 534).